The chain runs to 368 residues: Trans-enoyl reductase TwmE (368 aa).

49 to 52 provides a ligand contact to NADP(+); it reads SDYK. 135–142 is a substrate binding site; it reads FKAATLGT. NADP(+)-binding positions include 204–207, tyrosine 222, and 269–270; these read SPRS and LE. 290–294 lines the substrate pocket; sequence SAELY. Residue 360-361 participates in NADP(+) binding; it reads HP.

This sequence belongs to the zinc-containing alcohol dehydrogenase family. In terms of assembly, monomer.

It participates in secondary metabolite biosynthesis. Functionally, trans-enoyl reductase; part of the gene cluster that mediates the biosynthesis of wortmanamides A and B, reduced long-chain polyketides amidated with a specific omega-amino acid, 5-aminopentanoic acid (5PA). The PKS modules of TwmB are involved in the synthesis of the polyketide backbone, whereas the non-canonical C domain of TwmB is a bonafide condensation domain that specifically selects 5PA and catalyzes amidation to release polyketide chain. The C domain clearly prefers C16 and C18 fatty acyl substrates, which is consistent with simultaneous formation of both octaketide and nonaketide acyl amides wortmanamides A and B. Because TwmB lacks a designated enoylreductase (ER) domain, the required activity is provided the enoyl reductase TwmE. The roles of the remaining enzymes have still to be clarified. The sequence is that of Trans-enoyl reductase TwmE from Talaromyces wortmannii (Penicillium wortmannii).